Reading from the N-terminus, the 73-residue chain is Antimicrobial peptide 143 (73 aa).

An N-terminal signal peptide occupies residues 1-22 (MKVKCLLAVFLIVLIAAEHCQA). Residue lysine 38 is modified to Lysine amide. The propeptide occupies 44-73 (ELGTQFRPQQKNFMRREIDLERLFAEMPDY).

This sequence belongs to the non-disulfide-bridged peptide (NDBP) superfamily. Short antimicrobial peptide (group 4) family. Expressed by the venom gland.

The protein resides in the secreted. It localises to the target cell membrane. Functionally, cationic host defense peptide that have antibacterial activity by breaking membranes. Is more effective on Gram-positive than on Gram-negative bacteria. In Lychas mucronatus (Chinese swimming scorpion), this protein is Antimicrobial peptide 143.